A 148-amino-acid chain; its full sequence is UPF0260 protein ECA2365 (148 aa).

It belongs to the UPF0260 family.

This chain is UPF0260 protein ECA2365, found in Pectobacterium atrosepticum (strain SCRI 1043 / ATCC BAA-672) (Erwinia carotovora subsp. atroseptica).